The primary structure comprises 372 residues: Aminomethyltransferase (372 aa).

This sequence belongs to the GcvT family. As to quaternary structure, the glycine cleavage system is composed of four proteins: P, T, L and H.

It carries out the reaction N(6)-[(R)-S(8)-aminomethyldihydrolipoyl]-L-lysyl-[protein] + (6S)-5,6,7,8-tetrahydrofolate = N(6)-[(R)-dihydrolipoyl]-L-lysyl-[protein] + (6R)-5,10-methylene-5,6,7,8-tetrahydrofolate + NH4(+). Its function is as follows. The glycine cleavage system catalyzes the degradation of glycine. The protein is Aminomethyltransferase of Burkholderia orbicola (strain MC0-3).